The sequence spans 202 residues: uncharacterized protein (202 aa).

Residues 14–74 form the HTH tetR-type domain; sequence NAKTERILDV…AMADRYFQRC (61 aa).

This is an uncharacterized protein from Xanthobacter autotrophicus.